The primary structure comprises 207 residues: Oligoribonuclease (207 aa).

The region spanning 8-172 (LVWIDCEMTG…ADILESVREL (165 aa)) is the Exonuclease domain. Y129 is a catalytic residue.

The protein belongs to the oligoribonuclease family.

It is found in the cytoplasm. 3'-to-5' exoribonuclease specific for small oligoribonucleotides. The polypeptide is Oligoribonuclease (Leifsonia xyli subsp. xyli (strain CTCB07)).